The sequence spans 220 residues: Protein-L-isoaspartate O-methyltransferase (220 aa).

S65 is a catalytic residue.

The protein belongs to the methyltransferase superfamily. L-isoaspartyl/D-aspartyl protein methyltransferase family.

Its subcellular location is the cytoplasm. It catalyses the reaction [protein]-L-isoaspartate + S-adenosyl-L-methionine = [protein]-L-isoaspartate alpha-methyl ester + S-adenosyl-L-homocysteine. Functionally, catalyzes the methyl esterification of L-isoaspartyl residues in peptides and proteins that result from spontaneous decomposition of normal L-aspartyl and L-asparaginyl residues. It plays a role in the repair and/or degradation of damaged proteins. This chain is Protein-L-isoaspartate O-methyltransferase, found in Pelodictyon phaeoclathratiforme (strain DSM 5477 / BU-1).